A 98-amino-acid polypeptide reads, in one-letter code: Tax1-binding protein 3 (98 aa).

An N-acetylserine modification is found at Ser2. Residues 12 to 87 (VVQRVEIHKL…VVRLLVTRQS (76 aa)) enclose the PDZ domain.

In terms of assembly, interacts (via its PDZ domain) with GLS2. Interacts (via its PDZ domain) with RTKN (via the C-terminal region); this interaction facilitates Rho-mediated activation of the FOS serum response element (SRE). Interacts (via PDZ domain) with ARHGEF16. Interacts (via PDZ domain) with KCNJ4 (via C-terminus). Competes with LIN7A for KCNJ4 binding. Interacts (via its PDZ domain) with CTNNB1; this interaction inhibits the transcriptional activity of CTNNB1. Interacts with ADGRB2. As to expression, detected in kidney distal convoluted tubules (at protein level).

The protein localises to the cytoplasm. It localises to the nucleus. The protein resides in the cell membrane. Its function is as follows. May regulate a number of protein-protein interactions by competing for PDZ domain binding sites. Binds CTNNB1 and may thereby act as an inhibitor of the Wnt signaling pathway. Competes with LIN7A for KCNJ4 binding, and thereby promotes KCNJ4 internalization. May play a role in the Rho signaling pathway. The protein is Tax1-binding protein 3 of Rattus norvegicus (Rat).